Here is a 163-residue protein sequence, read N- to C-terminus: MQHYVTPDLCDAYPDLVQVLEPMFSNFGGRDSFGGQIVTIKCFEDNSRVKEQVELDGKGKVLVVDGGGSLRCALLGDMLAEKAAKNGWEGLVIYGCVRDVDVLIQTSVGVQALASHPMKTDKRGIGDLNVAVTFAGVTFRPGEYVYADNNGVIVSPSPLEMPQ.

Substrate is bound by residues 76-79 (GDML) and R98. D99 provides a ligand contact to a divalent metal cation.

This sequence belongs to the class II aldolase/RraA-like family. As to quaternary structure, homotrimer. The cofactor is a divalent metal cation.

The enzyme catalyses 4-hydroxy-4-methyl-2-oxoglutarate = 2 pyruvate. It catalyses the reaction oxaloacetate + H(+) = pyruvate + CO2. Functionally, catalyzes the aldol cleavage of 4-hydroxy-4-methyl-2-oxoglutarate (HMG) into 2 molecules of pyruvate. Also contains a secondary oxaloacetate (OAA) decarboxylase activity due to the common pyruvate enolate transition state formed following C-C bond cleavage in the retro-aldol and decarboxylation reactions. In Pseudomonas putida (strain W619), this protein is Putative 4-hydroxy-4-methyl-2-oxoglutarate aldolase.